The chain runs to 148 residues: uncharacterized protein (148 aa).

The tract at residues 55–148 is disordered; it reads KMRCGESGAG…RNQGQLYPQP (94 aa). Residues 68–104 show a composition bias toward polar residues; sequence RSNSAEVSSSQPALASKSQSKWGPTSNNPRGALTTTE.

This is an uncharacterized protein from Homo sapiens (Human).